A 296-amino-acid chain; its full sequence is Protein csh3 (296 aa).

The segment at 46–138 is disordered; it reads ASPVTAPAAQ…PPSYPGPNTA (93 aa). The segment covering 93-103 has biased composition (basic and acidic residues); it reads GEKRTPEEPRK. Residues 111–124 show a composition bias toward polar residues; the sequence is QKQSEASSVNSSTE. Residues 140–199 form the SH3 domain; the sequence is KNVERVLAMYDFPGPDAGDLGFHAGEVIIVLEHVNNDWWRGELNGKEGIFPSNYVRLLED. Residues 202-246 are disordered; the sequence is VKAQPPPPPPQQNYPPAASSSAPPMQYQQTAYPPQQAPYPPVQAY. Residues 205-214 show a composition bias toward pro residues; it reads QPPPPPPQQN. The span at 215–235 shows a compositional bias: low complexity; it reads YPPAASSSAPPMQYQQTAYPP.

The sequence is that of Protein csh3 (csh3) from Schizosaccharomyces pombe (strain 972 / ATCC 24843) (Fission yeast).